We begin with the raw amino-acid sequence, 466 residues long: Phage-like element PBSX protein XkdK (466 aa).

The protein belongs to the myoviridae tail sheath protein family.

The sequence is that of Phage-like element PBSX protein XkdK (xkdK) from Bacillus subtilis (strain 168).